A 694-amino-acid polypeptide reads, in one-letter code: MDTPRLHPETIAAVKERADIVDIVSEQVVLKKRGKDFVGLCPFHDDKSPSFTVSPAKQFYYCFSCGAGGNPIKFLMELGKQSFSEVVLDLAKRYQVPVRTLEVQQHQELQRQLSRRERLYEVLAVATQFYEQSLRRPEGAAALDYLRRSRQLQESTIQKFQLGYAPAQWASLATHLIEQKRFPADLVEEAGLVVARRNGQGYYDRFRDRLMIPIHDLQGRVVGFGGRTLTGEEPKYLNSPETTLFEKGKLLFGLDKARAAIAKQDQAVVVEGYFDVIALHAAGIDHAVASLGTALSRQQVKLLSRYSESNQIVLNFDADRAGAKAAERAIGEVEDLAYQGQVQLRVLNLPGGKDADEYLQRHSVADYRELLARSPLWLDWQIDQLLRDRNLDQADQFQAVVQAIVQLLGKLPNTPLRTHYVHQVAERLSQGEARTAVQLASDLRAQVRGQRWHGQASRWEKPGDVSIREQAEAQILKVYLHCPRLRLAVRKTLHDREIQGFSLQPHRLLWQAIAEIEEAHLGFAAMYQVERGEGNGDDLAAIDLVPILRDRLDQLTGVSLGGFLELSENDHADLTHPLPLLRGAVALVERLRCEKRCRHLLDSWARQSIHTFEHCIEQLLQAGIGEDVDAEAQITALHEQLNQEALHFQKLYYNERRYLQQLDQERCLNPQAFLGMTEHDATAIAPTTPQPISA.

The CHC2-type zinc-finger motif lies at 41 to 65 (CPFHDDKSPSFTVSPAKQFYYCFSC). In terms of domain architecture, Toprim spans 265-348 (DQAVVVEGYF…QGQVQLRVLN (84 aa)). E271, D317, and D319 together coordinate Mg(2+).

It belongs to the DnaG primase family. Monomer. Interacts with DnaB. Zn(2+) serves as cofactor. It depends on Mg(2+) as a cofactor.

The enzyme catalyses ssDNA + n NTP = ssDNA/pppN(pN)n-1 hybrid + (n-1) diphosphate.. In terms of biological role, RNA polymerase that catalyzes the synthesis of short RNA molecules used as primers for DNA polymerase during DNA replication. This chain is DNA primase, found in Synechococcus elongatus (strain ATCC 33912 / PCC 7942 / FACHB-805) (Anacystis nidulans R2).